Here is a 446-residue protein sequence, read N- to C-terminus: Glutamate-1-semialdehyde 2,1-aminomutase (446 aa).

K263 carries the post-translational modification N6-(pyridoxal phosphate)lysine.

This sequence belongs to the class-III pyridoxal-phosphate-dependent aminotransferase family. HemL subfamily. Pyridoxal 5'-phosphate serves as cofactor.

The protein localises to the cytoplasm. The catalysed reaction is (S)-4-amino-5-oxopentanoate = 5-aminolevulinate. Its pathway is porphyrin-containing compound metabolism; protoporphyrin-IX biosynthesis; 5-aminolevulinate from L-glutamyl-tRNA(Glu): step 2/2. The sequence is that of Glutamate-1-semialdehyde 2,1-aminomutase from Haloquadratum walsbyi (strain DSM 16790 / HBSQ001).